We begin with the raw amino-acid sequence, 110 residues long: UPF0060 membrane protein Pnap_4944 (110 aa).

Transmembrane regions (helical) follow at residues 8–28 (ILFA…WLVL), 33–53 (SLLL…LLTL), 65–85 (YGGM…GIAL), and 88–108 (WDLS…MQPS).

Belongs to the UPF0060 family.

It localises to the cell inner membrane. The polypeptide is UPF0060 membrane protein Pnap_4944 (Polaromonas naphthalenivorans (strain CJ2)).